The following is a 306-amino-acid chain: Methylated RNA-binding protein 1 (306 aa).

The 136-residue stretch at 155–290 (SRFFVIKSSS…SIGISIINLF (136 aa)) folds into the YTH domain. RNA is bound by residues 161–163 (KSS), Asn-207, and Trp-231.

In terms of biological role, RNA-binding protein that acts as a post-transcriptional regulator of phosphate metabolism by binding to the 3'-UTR region of PHO4 mRNA, decreasing its stability. Acts by recognizing and binding N6-methyladenosine (m6A)-containing RNAs, a modification present at internal sites of mRNAs and some non-coding RNAs. The sequence is that of Methylated RNA-binding protein 1 from Saccharomyces cerevisiae (strain ATCC 204508 / S288c) (Baker's yeast).